Here is a 389-residue protein sequence, read N- to C-terminus: Dihydroorotase (389 aa).

Zn(2+) is bound by residues His-51 and His-53. Residues 53–55 and Asn-85 each bind substrate; that span reads HVR. The Zn(2+) site is built by Lys-133, His-158, His-192, and Asp-254. Lys-133 bears the N6-carboxylysine mark. Asp-254 is an active-site residue. Substrate contacts are provided by residues His-258 and 272 to 273; that span reads PG.

Belongs to the metallo-dependent hydrolases superfamily. DHOase family. Class I DHOase subfamily. Zn(2+) is required as a cofactor.

The enzyme catalyses (S)-dihydroorotate + H2O = N-carbamoyl-L-aspartate + H(+). Its pathway is pyrimidine metabolism; UMP biosynthesis via de novo pathway; (S)-dihydroorotate from bicarbonate: step 3/3. Functionally, catalyzes the reversible cyclization of carbamoyl aspartate to dihydroorotate. The polypeptide is Dihydroorotase (Sulfurisphaera tokodaii (strain DSM 16993 / JCM 10545 / NBRC 100140 / 7) (Sulfolobus tokodaii)).